Here is a 930-residue protein sequence, read N- to C-terminus: Protein translocase subunit SecA (930 aa).

ATP is bound by residues Q83, 101–105, and D491; that span reads GEGKT.

It belongs to the SecA family. In terms of assembly, monomer and homodimer. Part of the essential Sec protein translocation apparatus which comprises SecA, SecYEG and auxiliary proteins SecDF. Other proteins may also be involved.

The protein localises to the cell inner membrane. Its subcellular location is the cellular thylakoid membrane. It localises to the cytoplasm. The enzyme catalyses ATP + H2O + cellular proteinSide 1 = ADP + phosphate + cellular proteinSide 2.. In terms of biological role, part of the Sec protein translocase complex. Interacts with the SecYEG preprotein conducting channel. Has a central role in coupling the hydrolysis of ATP to the transfer of proteins into and across the cell membrane, serving as an ATP-driven molecular motor driving the stepwise translocation of polypeptide chains across the membrane. Functionally, probably participates in protein translocation into and across both the cytoplasmic and thylakoid membranes in cyanobacterial cells. The protein is Protein translocase subunit SecA of Trichormus variabilis (strain ATCC 29413 / PCC 7937) (Anabaena variabilis).